A 1331-amino-acid polypeptide reads, in one-letter code: DNA-directed RNA polymerase subunit beta' (1331 aa).

Zn(2+)-binding residues include C220, C293, C300, and C303. Disordered regions lie at residues 1236–1257 (DFVDEGTSRSPNGYSNVVTNDN) and 1294–1331 (ISGDELISDDTPIPSDVQGKAPVIDDDAMIDDNWMKDQ). The span at 1243–1257 (SRSPNGYSNVVTNDN) shows a compositional bias: polar residues.

It belongs to the RNA polymerase beta' chain family. RpoC2 subfamily. As to quaternary structure, in cyanobacteria the RNAP catalytic core is composed of 2 alpha, 1 beta, 1 beta', 1 gamma and 1 omega subunit. When a sigma factor is associated with the core the holoenzyme is formed, which can initiate transcription. Requires Zn(2+) as cofactor.

It carries out the reaction RNA(n) + a ribonucleoside 5'-triphosphate = RNA(n+1) + diphosphate. DNA-dependent RNA polymerase catalyzes the transcription of DNA into RNA using the four ribonucleoside triphosphates as substrates. In Picosynechococcus sp. (strain ATCC 27264 / PCC 7002 / PR-6) (Agmenellum quadruplicatum), this protein is DNA-directed RNA polymerase subunit beta'.